A 692-amino-acid polypeptide reads, in one-letter code: Elongation factor G (692 aa).

A tr-type G domain is found at 8-282; sequence EKTRNIGIMA…AVLDYLPAPT (275 aa). GTP is bound by residues 17-24, 81-85, and 135-138; these read AHIDAGKT, DTPGH, and NKMD.

The protein belongs to the TRAFAC class translation factor GTPase superfamily. Classic translation factor GTPase family. EF-G/EF-2 subfamily.

The protein localises to the cytoplasm. In terms of biological role, catalyzes the GTP-dependent ribosomal translocation step during translation elongation. During this step, the ribosome changes from the pre-translocational (PRE) to the post-translocational (POST) state as the newly formed A-site-bound peptidyl-tRNA and P-site-bound deacylated tRNA move to the P and E sites, respectively. Catalyzes the coordinated movement of the two tRNA molecules, the mRNA and conformational changes in the ribosome. This is Elongation factor G from Bacillus velezensis (strain DSM 23117 / BGSC 10A6 / LMG 26770 / FZB42) (Bacillus amyloliquefaciens subsp. plantarum).